A 58-amino-acid polypeptide reads, in one-letter code: Small ribosomal subunit protein bS21 (58 aa).

The disordered stretch occupies residues 36–58 (EFYEKPSVKRKRKSEAARKRKKF). Residues 43–58 (VKRKRKSEAARKRKKF) show a composition bias toward basic residues.

It belongs to the bacterial ribosomal protein bS21 family.

This Streptococcus uberis (strain ATCC BAA-854 / 0140J) protein is Small ribosomal subunit protein bS21.